An 89-amino-acid chain; its full sequence is MYFMTKKMLTFVQTPKEGLSFAMTTYLNLFVKLLIFLYIQNTKACLSINNVNNNSKNKLRSGVSYYIINLKMSMLFTEQIVTIYNKLIF.

Residues 20-39 (SFAMTTYLNLFVKLLIFLYI) traverse the membrane as a helical segment.

It localises to the membrane. This is an uncharacterized protein from Escherichia coli (strain K12).